The sequence spans 332 residues: GTP 3',8-cyclase (332 aa).

The 215-residue stretch at 7-221 (SYDRLHDYVR…FDTCKDNGLA (215 aa)) folds into the Radical SAM core domain. Arg16 contributes to the GTP binding site. Cys23 and Cys27 together coordinate [4Fe-4S] cluster. Tyr29 contributes to the S-adenosyl-L-methionine binding site. [4Fe-4S] cluster is bound at residue Cys30. Arg66 serves as a coordination point for GTP. Gly70 contacts S-adenosyl-L-methionine. Thr97 contributes to the GTP binding site. Ser121 contacts S-adenosyl-L-methionine. Residue Lys158 coordinates GTP. Position 192 (Met192) interacts with S-adenosyl-L-methionine. Cys256 and Cys259 together coordinate [4Fe-4S] cluster. 261–263 (RLR) is a binding site for GTP. Cys273 is a [4Fe-4S] cluster binding site.

Belongs to the radical SAM superfamily. MoaA family. As to quaternary structure, monomer and homodimer. It depends on [4Fe-4S] cluster as a cofactor.

The catalysed reaction is GTP + AH2 + S-adenosyl-L-methionine = (8S)-3',8-cyclo-7,8-dihydroguanosine 5'-triphosphate + 5'-deoxyadenosine + L-methionine + A + H(+). The protein operates within cofactor biosynthesis; molybdopterin biosynthesis. Catalyzes the cyclization of GTP to (8S)-3',8-cyclo-7,8-dihydroguanosine 5'-triphosphate. In Lactiplantibacillus plantarum (strain ATCC BAA-793 / NCIMB 8826 / WCFS1) (Lactobacillus plantarum), this protein is GTP 3',8-cyclase.